A 393-amino-acid chain; its full sequence is NAD(P)H-quinone oxidoreductase subunit H, chloroplastic (393 aa).

It belongs to the complex I 49 kDa subunit family. In terms of assembly, NDH is composed of at least 16 different subunits, 5 of which are encoded in the nucleus.

The protein localises to the plastid. It is found in the chloroplast thylakoid membrane. It catalyses the reaction a plastoquinone + NADH + (n+1) H(+)(in) = a plastoquinol + NAD(+) + n H(+)(out). It carries out the reaction a plastoquinone + NADPH + (n+1) H(+)(in) = a plastoquinol + NADP(+) + n H(+)(out). NDH shuttles electrons from NAD(P)H:plastoquinone, via FMN and iron-sulfur (Fe-S) centers, to quinones in the photosynthetic chain and possibly in a chloroplast respiratory chain. The immediate electron acceptor for the enzyme in this species is believed to be plastoquinone. Couples the redox reaction to proton translocation, and thus conserves the redox energy in a proton gradient. The sequence is that of NAD(P)H-quinone oxidoreductase subunit H, chloroplastic from Chlorokybus atmophyticus (Soil alga).